The chain runs to 310 residues: N-acetyl-gamma-glutamyl-phosphate reductase (310 aa).

Cysteine 117 is a catalytic residue.

The protein belongs to the NAGSA dehydrogenase family. Type 2 subfamily.

The protein localises to the cytoplasm. It carries out the reaction N-acetyl-L-glutamate 5-semialdehyde + phosphate + NADP(+) = N-acetyl-L-glutamyl 5-phosphate + NADPH + H(+). It functions in the pathway amino-acid biosynthesis; L-arginine biosynthesis; N(2)-acetyl-L-ornithine from L-glutamate: step 3/4. In terms of biological role, catalyzes the NADPH-dependent reduction of N-acetyl-5-glutamyl phosphate to yield N-acetyl-L-glutamate 5-semialdehyde. The polypeptide is N-acetyl-gamma-glutamyl-phosphate reductase (Rhizobium etli (strain ATCC 51251 / DSM 11541 / JCM 21823 / NBRC 15573 / CFN 42)).